Here is a 302-residue protein sequence, read N- to C-terminus: MKKVKVCAPGTSANLGPGYDIFGIALSKPYDIVTIEKVDEFGIKITLEGEKAEEIPTNVEENTAGVVAKKMIEDFKIESGIHIHIVKGIKPGSGLGSSSASCAGVAFGLNELFELKLSKLDLVKYASLGEAVAAGAPHADNVAPAIFGGFTLTTNYEPLEVLHIPVEIDVIVALPNIQVSTKSAREILPKEVPMKSMVNNVGKAAGMIYALYNNDLDLFGQYMSKDAVVEPCRAQLITGYLEIKEKLKDLVYGVTISGSGPAIIAIPKKEHVIDIKNIFKEVYNCPVYYTRVGLGCYIEEIE.

90 to 100 (KPGSGLGSSSA) lines the ATP pocket.

The protein belongs to the GHMP kinase family. Homoserine kinase subfamily.

The protein resides in the cytoplasm. The catalysed reaction is L-homoserine + ATP = O-phospho-L-homoserine + ADP + H(+). It functions in the pathway amino-acid biosynthesis; L-threonine biosynthesis; L-threonine from L-aspartate: step 4/5. Catalyzes the ATP-dependent phosphorylation of L-homoserine to L-homoserine phosphate. The polypeptide is Homoserine kinase (Methanococcus vannielii (strain ATCC 35089 / DSM 1224 / JCM 13029 / OCM 148 / SB)).